A 508-amino-acid polypeptide reads, in one-letter code: Histone acetyltransferase type B catalytic subunit (508 aa).

2 interaction with histone H4 N-terminus regions span residues 44–46 and 207–209; these read EKE and YRY. Acetyl-CoA contacts are provided by residues 249 to 251 and 256 to 262; these read FII and QQKGLGS. The Proton donor/acceptor role is filled by E284. Disordered regions lie at residues 364–399 and 461–508; these read SVRPGLGAPEDEDYEEQSGRSKSKGHEKALPKPTPE and QADG…SGHA. Residues 387–399 show a composition bias toward basic and acidic residues; that stretch reads KGHEKALPKPTPE.

This sequence belongs to the HAT1 family. As to quaternary structure, component of the HAT-B complex composed of at least hat-1 and hat-2. The HAT-B complex binds to histone H4 tail.

It localises to the cytoplasm. The protein localises to the nucleus. The catalysed reaction is L-lysyl-[protein] + acetyl-CoA = N(6)-acetyl-L-lysyl-[protein] + CoA + H(+). Catalytic component of the histone acetylase B (HAT-B) complex. Acetylates 'Lys-12' of histone H4 which is required for telomeric silencing. Has intrinsic substrate specificity that modifies lysine in recognition sequence GXGKXG. Involved in DNA double-strand break repair. This is Histone acetyltransferase type B catalytic subunit (hat-1) from Neurospora crassa (strain ATCC 24698 / 74-OR23-1A / CBS 708.71 / DSM 1257 / FGSC 987).